The chain runs to 180 residues: Putative adenylate kinase (180 aa).

ATP is bound by residues Gly-10, Gly-12, Lys-13, Thr-14, and Thr-15. Residues 30 to 50 (NLRDFALEKGIGEVKGDELEV) are NMP. Residues 99–109 (ERGYSKDKIGE) are LID. The ATP site is built by Arg-100 and Lys-138.

The protein belongs to the adenylate kinase family. AK6 subfamily. Interacts with uS11. Not a structural component of 40S pre-ribosomes, but transiently interacts with them by binding to uS11.

The enzyme catalyses AMP + ATP = 2 ADP. It catalyses the reaction ATP + H2O = ADP + phosphate + H(+). Its function is as follows. Broad-specificity nucleoside monophosphate (NMP) kinase that catalyzes the reversible transfer of the terminal phosphate group between nucleoside triphosphates and monophosphates. Also has ATPase activity. Involved in the late maturation steps of the 30S ribosomal particles, specifically 16S rRNA maturation. While NMP activity is not required for ribosome maturation, ATPase activity is. Associates transiently with small ribosomal subunit protein uS11. ATP hydrolysis breaks the interaction with uS11. May temporarily remove uS11 from the ribosome to enable a conformational change of the ribosomal RNA that is needed for the final maturation step of the small ribosomal subunit. The polypeptide is Putative adenylate kinase (Pyrococcus furiosus (strain ATCC 43587 / DSM 3638 / JCM 8422 / Vc1)).